A 501-amino-acid polypeptide reads, in one-letter code: Iroquois-class homeodomain protein IRX-3 (501 aa).

The homeobox; TALE-type DNA-binding region spans 125–188 (FGDPSRPKNA…ANARRRLKKE (64 aa)). The segment at 190-381 (KMTWAPRSRT…SPPGAAVAPS (192 aa)) is disordered. 2 stretches are compositionally biased toward acidic residues: residues 210 to 220 (REEEDEEEDEE) and 227 to 258 (ELEE…DLEN). Ser-323 and Ser-326 each carry phosphoserine. Residues 324–339 (LPSPPVSLDPCAPAPA) are compositionally biased toward pro residues.

This sequence belongs to the TALE/IRO homeobox family.

Its subcellular location is the nucleus. In terms of biological role, transcription factor involved in SHH-dependent neural patterning. Together with NKX2-2 and NKX6-1 acts to restrict the generation of motor neurons to the appropriate region of the neural tube. Belongs to the class I proteins of neuronal progenitor factors, which are repressed by SHH signals. Involved in the transcriptional repression of MNX1 in non-motor neuron cells. Acts as a regulator of energy metabolism. The chain is Iroquois-class homeodomain protein IRX-3 (IRX3) from Homo sapiens (Human).